We begin with the raw amino-acid sequence, 167 residues long: Phosphopantetheine adenylyltransferase (167 aa).

Thr-10 is a substrate binding site. ATP is bound by residues 10-11 and His-18; that span reads TF. The substrate site is built by Lys-42, Leu-75, and Arg-89. Residues 90–92, Glu-100, and 125–131 contribute to the ATP site; these read GVR and YTYVASS.

The protein belongs to the bacterial CoaD family. In terms of assembly, homohexamer. Mg(2+) serves as cofactor.

The protein localises to the cytoplasm. The catalysed reaction is (R)-4'-phosphopantetheine + ATP + H(+) = 3'-dephospho-CoA + diphosphate. Its pathway is cofactor biosynthesis; coenzyme A biosynthesis; CoA from (R)-pantothenate: step 4/5. Functionally, reversibly transfers an adenylyl group from ATP to 4'-phosphopantetheine, yielding dephospho-CoA (dPCoA) and pyrophosphate. The polypeptide is Phosphopantetheine adenylyltransferase (Chlorobium phaeobacteroides (strain DSM 266 / SMG 266 / 2430)).